A 429-amino-acid polypeptide reads, in one-letter code: tRNA(Ile2) 2-agmatinylcytidine synthetase TiaS (429 aa).

The segment at residues 271 to 343 is a DNA-binding region (OB); that stretch reads VRGKVIKKYW…LTLNLEKFYP (73 aa).

This sequence belongs to the TiaS family.

It localises to the cytoplasm. The catalysed reaction is cytidine(34) in tRNA(Ile2) + agmatine + ATP + H2O = 2-agmatinylcytidine(34) in tRNA(Ile2) + AMP + 2 phosphate + 2 H(+). Its function is as follows. ATP-dependent agmatine transferase that catalyzes the formation of 2-agmatinylcytidine (agm2C) at the wobble position (C34) of tRNA(Ile2), converting the codon specificity from AUG to AUA. This chain is tRNA(Ile2) 2-agmatinylcytidine synthetase TiaS, found in Thermococcus sibiricus (strain DSM 12597 / MM 739).